We begin with the raw amino-acid sequence, 279 residues long: Eukaryotic translation initiation factor 3 subunit G (279 aa).

Disordered regions lie at residues 1 to 26, 66 to 115, and 152 to 171; these read MSTG…IANP, RKNW…KAHE, and TPSG…AAGA. At Ser78 the chain carries Phosphoserine. Residues 102-115 are compositionally biased toward basic and acidic residues; that stretch reads KQDEKKEEEDKAHE. Over residues 152-163 the composition is skewed to low complexity; it reads TPSGTTPEPTSE. In terms of domain architecture, RRM spans 197–276; sequence TTLKVSQLNS…LILHLEWSKK (80 aa).

This sequence belongs to the eIF-3 subunit G family. Component of the eukaryotic translation initiation factor 3 (eIF-3) complex.

It is found in the cytoplasm. RNA-binding component of the eukaryotic translation initiation factor 3 (eIF-3) complex, which is involved in protein synthesis of a specialized repertoire of mRNAs and, together with other initiation factors, stimulates binding of mRNA and methionyl-tRNAi to the 40S ribosome. The eIF-3 complex specifically targets and initiates translation of a subset of mRNAs involved in cell proliferation. This subunit can bind 18S rRNA. The sequence is that of Eukaryotic translation initiation factor 3 subunit G from Candida albicans (strain SC5314 / ATCC MYA-2876) (Yeast).